Reading from the N-terminus, the 608-residue chain is Myosin light chain kinase 2, skeletal/cardiac muscle (608 aa).

The disordered stretch occupies residues 1–160 (MATENGAVEL…RGSPAFLHSP (160 aa)). Residue A2 is modified to N-acetylalanine. Basic and acidic residues-rich tracts occupy residues 31-43 (AAEK…DPEK) and 50-63 (TKQD…KKDA). A compositionally biased stretch (gly residues) spans 82 to 91 (GSQGPAGEGG). Positions 116–127 (ASEKKPEAEKGP) are enriched in basic and acidic residues. 3 positions are modified to phosphoserine: S153, S159, and S161. Residues 214–235 (QKEAGEKAPGQADQAKVQGDTS) form a disordered region. The 256-residue stretch at 297–552 (MNSKEALGGG…AAQCLAHPWL (256 aa)) folds into the Protein kinase domain. ATP-binding positions include 303 to 311 (LGGGKFGAV) and K326. D418 acts as the Proton acceptor in catalysis. T457 bears the Phosphothreonine mark. A calmodulin-binding region spans residues 586–598 (IAVSAANRFKKIS).

It belongs to the protein kinase superfamily. CAMK Ser/Thr protein kinase family. May interact with centrin.

The protein resides in the cytoplasm. It catalyses the reaction L-seryl-[myosin light chain] + ATP = O-phospho-L-seryl-[myosin light chain] + ADP + H(+). The enzyme catalyses L-threonyl-[myosin light chain] + ATP = O-phospho-L-threonyl-[myosin light chain] + ADP + H(+). Functionally, implicated in the level of global muscle contraction and cardiac function. Phosphorylates a specific serine in the N-terminus of a myosin light chain. The protein is Myosin light chain kinase 2, skeletal/cardiac muscle (MYLK2) of Oryctolagus cuniculus (Rabbit).